The sequence spans 189 residues: Large ribosomal subunit protein uL10 (189 aa).

It belongs to the universal ribosomal protein uL10 family. As to quaternary structure, part of the ribosomal stalk of the 50S ribosomal subunit. The N-terminus interacts with L11 and the large rRNA to form the base of the stalk. The C-terminus forms an elongated spine to which L12 dimers bind in a sequential fashion forming a multimeric L10(L12)X complex.

Its function is as follows. Forms part of the ribosomal stalk, playing a central role in the interaction of the ribosome with GTP-bound translation factors. The polypeptide is Large ribosomal subunit protein uL10 (Rippkaea orientalis (strain PCC 8801 / RF-1) (Cyanothece sp. (strain PCC 8801))).